The following is a 481-amino-acid chain: Cardiolipin synthase A (481 aa).

The next 2 helical transmembrane spans lie at 10-30 (FFGY…LHAL) and 40-60 (IAWA…YLIF). PLD phosphodiesterase domains lie at 220–247 (VNFR…GDEY) and 394–421 (QPGF…DNRS). Residues histidine 225, lysine 227, aspartate 232, histidine 399, lysine 401, and aspartate 406 contribute to the active site.

This sequence belongs to the phospholipase D family. Cardiolipin synthase subfamily. ClsA sub-subfamily.

Its subcellular location is the cell inner membrane. The catalysed reaction is 2 a 1,2-diacyl-sn-glycero-3-phospho-(1'-sn-glycerol) = a cardiolipin + glycerol. In terms of biological role, catalyzes the reversible phosphatidyl group transfer from one phosphatidylglycerol molecule to another to form cardiolipin (CL) (diphosphatidylglycerol) and glycerol. The polypeptide is Cardiolipin synthase A (Pseudomonas putida (strain ATCC 47054 / DSM 6125 / CFBP 8728 / NCIMB 11950 / KT2440)).